Reading from the N-terminus, the 433-residue chain is Succinate--CoA ligase [ADP-forming] subunit beta, mitochondrial (433 aa).

Residues 1–23 (MLTRSVLRKAPRAFSPFLQKRNL) constitute a mitochondrion transit peptide. Positions 31-273 (HDILRKFGVD…ISQEDPDEAR (243 aa)) constitute an ATP-grasp domain. ATP is bound by residues lysine 68, 75–77 (GRG), and glutamate 136. Mg(2+)-binding residues include asparagine 228 and aspartate 242. Substrate is bound by residues asparagine 293 and 350-352 (GIV).

Belongs to the succinate/malate CoA ligase beta subunit family. In terms of assembly, heterodimer of an alpha and a beta subunit. Requires Mg(2+) as cofactor.

The protein resides in the mitochondrion. It carries out the reaction succinate + ATP + CoA = succinyl-CoA + ADP + phosphate. It functions in the pathway carbohydrate metabolism; tricarboxylic acid cycle; succinate from succinyl-CoA (ligase route): step 1/1. Succinyl-CoA synthetase functions in the citric acid cycle (TCA), coupling the hydrolysis of succinyl-CoA to the synthesis of ATP and thus represents the only step of substrate-level phosphorylation in the TCA. The beta subunit provides nucleotide specificity of the enzyme and binds the substrate succinate, while the binding sites for coenzyme A and phosphate are found in the alpha subunit. This is Succinate--CoA ligase [ADP-forming] subunit beta, mitochondrial from Schizosaccharomyces pombe (strain 972 / ATCC 24843) (Fission yeast).